Consider the following 1000-residue polypeptide: ATP-dependent DNA/RNA helicase DHX36 (1000 aa).

The required for recruitment to cytoplasmic stress granules stretch occupies residues 1–43; the sequence is MSYDYHQSWSRDGGPRGSGQGSGGGGGGSRGSGGGGGGRGGRG. The segment at 1–53 is disordered; sequence MSYDYHQSWSRDGGPRGSGQGSGGGGGGSRGSGGGGGGRGGRGRHPAHLKGRE. The segment at 1-96 is required for the pre-miR-134 transport; sequence MSYDYHQSWS…IVQLLNSVQA (96 aa). The tract at residues 1–192 is necessary for nuclear and nucleolar caps localizations; sequence MSYDYHQSWS…KKTDPRYIEM (192 aa). Gly residues predominate over residues 15 to 40; it reads PRGSGQGSGGGGGGSRGSGGGGGGRG. The DSM (DHX36-specific motif) stretch occupies residues 45 to 67; sequence HPAHLKGREIGLWYAKKQTQKNK. The required for G4-DNA- and G4-RNA-binding stretch occupies residues 45-97; the sequence is HPAHLKGREIGLWYAKKQTQKNKEAERQERAVVHMDERREEQIVQLLNSVQAK. 2 recA-like domain regions span residues 98-378 and 379-620; these read NDKD…MIHI and PGFT…DYQL. Residue S153 is modified to Phosphoserine. One can recognise a Helicase ATP-binding domain in the interval 209–379; sequence VNLINNHQVT…FGNCPMIHIP (171 aa). ATP is bound at residue 225 to 230; the sequence is GCGKTT. Positions 257-309 are necessary for interaction with single-stranded DNA at the 3'-end of the G4-DNA structure; it reads RRISAISVAERVAAERAESCGNGNSTGYQIRLQSRLPRKQGSILYCTTGIILQ. A DEAH box motif is present at residues 326 to 329; the sequence is DEIH. Mg(2+)-binding residues include E327 and H329. Residues 469–639 form the Helicase C-terminal domain; it reads ALIRYIVLEE…ELCLQIKILR (171 aa). Residues 490 to 549 are necessary for interaction with single-stranded DNA at the 3'-end of the G4-DNA structure; that stretch reads WDNISTLHDLLMSQVMFKSDRFLIIPLHSLMPTVNQTQVFKKTPPGVRKIVIATNIAETS. The short motif at 509–520 is the Nuclear localization signal element; the sequence is DRFLIIPLHSLM. Residues S549 and 594 to 597 contribute to the ATP site; that span reads RAGR. The interval 621-690 is WH domain; that stretch reads PEILRTPLEE…LGVHLARLPV (70 aa). 3 necessary for interaction with single-stranded DNA at the 3'-end of the G4-DNA structure regions span residues 630–689, 841–852, and 862–892; these read ELCL…ARLP, NLGKKRKMVKVH, and HPKS…IYLY. The interval 833-897 is OB-fold-like subdomains; the sequence is PKVAKIRLNL…SIYLYDCTEV (65 aa). K939 carries the post-translational modification N6-acetyllysine.

In terms of assembly, found in a multi-helicase-TICAM1 complex at least composed of DHX36, DDX1, DDX21 and TICAM1; this complex exists in resting cells with or without dsRNA poly(I:C) ligand stimulation. Interacts (via C-terminus) with TICAM1 (via TIR domain). Interacts (via C-terminus) with DDX21; this interaction serves as bridges to TICAM1. Interacts with TERT; this interaction is dependent on the ability of DHX36 to bind to the G-quadruplex RNA (G4-RNA) structure present in the telomerase RNA template component (TERC). Interacts with DKC1; this interaction is dependent on the ability of DHX36 to bind to the G4-RNA structure present in TERC. Interacts with PARN; this interaction stimulates PARN to enhance uPA mRNA decay. Interacts with EXOSC3; this interaction occurs in a RNase-insensitive manner. Interacts with EXOSC10; this interaction occurs in a RNase-insensitive manner. Interacts with ILF3; this interaction occurs in a RNA-dependent manner. Interacts with ELAVL1; this interaction occurs in an RNA-dependent manner. Interacts with DDX5; this interaction occurs in a RNA-dependent manner. Interacts with DDX17; this interaction occurs in a RNA-dependent manner. Interacts with HDAC1; this interaction occurs in a RNA-dependent manner. Interacts with HDAC3; this interaction occurs in a RNA-dependent manner. Interacts with HDAC4. Interacts with AGO1. Interacts with AGO2. Interacts with ERCC6. Mg(2+) is required as a cofactor.

It is found in the nucleus. It localises to the cytoplasm. Its subcellular location is the cytosol. The protein resides in the stress granule. The protein localises to the nucleus speckle. It is found in the chromosome. It localises to the telomere. Its subcellular location is the mitochondrion. The protein resides in the perikaryon. The protein localises to the cell projection. It is found in the dendrite. It localises to the axon. The enzyme catalyses ATP + H2O = ADP + phosphate + H(+). ATPase activity is enhanced in the presence of homomeric poly(U) RNAs, but not by double-stranded DNA (dsDNA), double-stranded RNA (dsRNA) and tRNA. Multifunctional ATP-dependent helicase that unwinds G-quadruplex (G4) structures. Plays a role in many biological processes such as genomic integrity, gene expression regulations and as a sensor to initiate antiviral responses. G4 structures correspond to helical structures containing guanine tetrads. Binds with high affinity to and unwinds G4 structures that are formed in nucleic acids (G4-DNA and G4-RNA). Plays a role in genomic integrity. Converts the G4-RNA structure present in telomerase RNA template component (TREC) into a double-stranded RNA to promote P1 helix formation that acts as a template boundary ensuring accurate reverse transcription. Plays a role in transcriptional regulation. Resolves G4-DNA structures in promoters of genes, such as YY1, KIT/c-kit and ALPL and positively regulates their expression. Plays a role in post-transcriptional regulation. Unwinds a G4-RNA structure located in the 3'-UTR polyadenylation site of the pre-mRNA TP53 and stimulates TP53 pre-mRNA 3'-end processing in response to ultraviolet (UV)-induced DNA damage. Binds to the precursor-microRNA-134 (pre-miR-134) terminal loop and regulates its transport into the synapto-dendritic compartment. Involved in the pre-miR-134-dependent inhibition of target gene expression and the control of dendritic spine size. Plays a role in the regulation of cytoplasmic mRNA translation and mRNA stability. Binds to both G4-RNA structures and alternative non-quadruplex-forming sequence within the 3'-UTR of the PITX1 mRNA regulating negatively PITX1 protein expression. Binds to both G4-RNA structure in the 5'-UTR and AU-rich elements (AREs) localized in the 3'-UTR of NKX2-5 mRNA to either stimulate protein translation or induce mRNA decay in an ELAVL1-dependent manner, respectively. Also binds to ARE sequences present in several mRNAs mediating exosome-mediated 3'-5' mRNA degradation. Involved in cytoplasmic urokinase-type plasminogen activator (uPA) mRNA decay. Component of a multi-helicase-TICAM1 complex that acts as a cytoplasmic sensor of viral double-stranded RNA (dsRNA) and plays a role in the activation of a cascade of antiviral responses including the induction of pro-inflammatory cytokines via the adapter molecule TICAM1. Required for the early embryonic development and hematopoiesis. Involved in the regulation of cardioblast differentiation and proliferation during heart development. Involved in spermatogonia differentiation. May play a role in ossification. The sequence is that of ATP-dependent DNA/RNA helicase DHX36 from Rattus norvegicus (Rat).